The primary structure comprises 255 residues: Small ribosomal subunit protein uS3c (255 aa).

Residues 51–124 enclose the KH type-2 domain; it reads IRESSNTSYG…NKNQNKNTGQ (74 aa). A disordered region spans residues 96–121; the sequence is EKNRDKNKSNKNSALDQSVNKNQNKN. Positions 108-121 are enriched in polar residues; the sequence is SALDQSVNKNQNKN.

The protein belongs to the universal ribosomal protein uS3 family. Part of the 30S ribosomal subunit.

It localises to the plastid. The protein resides in the chloroplast. The sequence is that of Small ribosomal subunit protein uS3c (rps3) from Chaetosphaeridium globosum (Charophycean green alga).